We begin with the raw amino-acid sequence, 192 residues long: Pyridoxal 5'-phosphate synthase subunit PdxT (192 aa).

Gly47 to Ser49 contributes to the L-glutamine binding site. The active-site Nucleophile is Cys78. L-glutamine is bound by residues Arg105 and Ile139–Arg140. Catalysis depends on charge relay system residues His175 and Glu177.

It belongs to the glutaminase PdxT/SNO family. As to quaternary structure, in the presence of PdxS, forms a dodecamer of heterodimers. Only shows activity in the heterodimer.

It catalyses the reaction aldehydo-D-ribose 5-phosphate + D-glyceraldehyde 3-phosphate + L-glutamine = pyridoxal 5'-phosphate + L-glutamate + phosphate + 3 H2O + H(+). It carries out the reaction L-glutamine + H2O = L-glutamate + NH4(+). It functions in the pathway cofactor biosynthesis; pyridoxal 5'-phosphate biosynthesis. Functionally, catalyzes the hydrolysis of glutamine to glutamate and ammonia as part of the biosynthesis of pyridoxal 5'-phosphate. The resulting ammonia molecule is channeled to the active site of PdxS. In Solibacter usitatus (strain Ellin6076), this protein is Pyridoxal 5'-phosphate synthase subunit PdxT.